A 189-amino-acid polypeptide reads, in one-letter code: Thioredoxin-like protein CITRX, chloroplastic (189 aa).

A chloroplast-targeting transit peptide spans 1–36 (MAMAAAASLLPACAAPTLPGRAFRPRRNSTPTASLS). The 118-residue stretch at 72-189 (GSGKYIAPDY…MIRNIIDNEL (118 aa)) folds into the Thioredoxin domain. Catalysis depends on nucleophile residues cysteine 112 and cysteine 115. A disulfide bond links cysteine 112 and cysteine 115.

This sequence belongs to the thioredoxin family. Plant CITRX-type subfamily.

The protein resides in the plastid. It is found in the chloroplast. In terms of biological role, probable thiol-disulfide oxidoreductase that may play a role in proper chloroplast development. The polypeptide is Thioredoxin-like protein CITRX, chloroplastic (Oryza sativa subsp. indica (Rice)).